Reading from the N-terminus, the 374-residue chain is uncharacterized protein (374 aa).

It belongs to the mimivirus L41 family.

This is an uncharacterized protein from Acanthamoeba polyphaga (Amoeba).